The sequence spans 430 residues: MSKIVKVVGREIMDSRGNPTVEADVYLESGHMGRAAAPSGASTGSREALELRDGDTSRYLGKGVETAVANINGAIAEALSGIDAINQEAVDNIMLRLDGTDNKEKLGANAILAVSLAVAKAAALSKGIELYEHIANLNNTSGKYSMPLPMMNILNGGEHADNNVDIQEFMIQPVGAESFKEGLRMGAEVFHALKKVLQKRGLSTAVGDEGGFAPNLASNEEALQVIVEAVENAGYKMGSDITLALDCAASEFYRDGKYELSGEGKSFTAEEFADYLAELCDRYPIISIEDGLDESDWDGWKVLTEKLGSKVQLVGDDLFVTNTRILKEGIDKSIANSILIKFNQIGSLTETLAAIAMAREAGYSAVISHRSGETEDATIADLAVGTAAGQIKTGSLCRSDRVAKYNQLLRIEGDLNGQAPYRGRQEVNAG.

Gln167 lines the (2R)-2-phosphoglycerate pocket. The active-site Proton donor is Glu209. Mg(2+) contacts are provided by Asp246, Glu289, and Asp316. (2R)-2-phosphoglycerate contacts are provided by Lys341, Arg370, Ser371, and Lys392. Catalysis depends on Lys341, which acts as the Proton acceptor.

It belongs to the enolase family. In terms of assembly, component of the RNA degradosome, a multiprotein complex involved in RNA processing and mRNA degradation. Requires Mg(2+) as cofactor.

The protein resides in the cytoplasm. Its subcellular location is the secreted. The protein localises to the cell surface. It catalyses the reaction (2R)-2-phosphoglycerate = phosphoenolpyruvate + H2O. Its pathway is carbohydrate degradation; glycolysis; pyruvate from D-glyceraldehyde 3-phosphate: step 4/5. Functionally, catalyzes the reversible conversion of 2-phosphoglycerate (2-PG) into phosphoenolpyruvate (PEP). It is essential for the degradation of carbohydrates via glycolysis. The chain is Enolase from Idiomarina loihiensis (strain ATCC BAA-735 / DSM 15497 / L2-TR).